The chain runs to 151 residues: Odorant-binding protein (151 aa).

Disulfide bonds link C38-C42 and C57-C149.

The protein belongs to the calycin superfamily. Lipocalin family. Expressed in salivary glands, hair and urine.

The protein localises to the secreted. May act as a pheromone. In Phodopus sungorus (Striped hairy-footed hamster), this protein is Odorant-binding protein.